We begin with the raw amino-acid sequence, 518 residues long: Anthranilate synthase component 1 (518 aa).

L-tryptophan contacts are provided by residues S41 and 291 to 293 (PYM). Residue 328–329 (GS) coordinates chorismate. Mg(2+) is bound at residue E361. Residues Y449, R469, 483 to 485 (GCG), and G485 contribute to the chorismate site. E498 provides a ligand contact to Mg(2+).

This sequence belongs to the anthranilate synthase component I family. In terms of assembly, heterotetramer consisting of two non-identical subunits: a beta subunit (TrpG) and a large alpha subunit (TrpE). Mg(2+) serves as cofactor.

The enzyme catalyses chorismate + L-glutamine = anthranilate + pyruvate + L-glutamate + H(+). The protein operates within amino-acid biosynthesis; L-tryptophan biosynthesis; L-tryptophan from chorismate: step 1/5. Its activity is regulated as follows. Feedback inhibited by tryptophan. Its function is as follows. Part of a heterotetrameric complex that catalyzes the two-step biosynthesis of anthranilate, an intermediate in the biosynthesis of L-tryptophan. In the first step, the glutamine-binding beta subunit (TrpG) of anthranilate synthase (AS) provides the glutamine amidotransferase activity which generates ammonia as a substrate that, along with chorismate, is used in the second step, catalyzed by the large alpha subunit of AS (TrpE) to produce anthranilate. In the absence of TrpG, TrpE can synthesize anthranilate directly from chorismate and high concentrations of ammonia. The protein is Anthranilate synthase component 1 (trpE) of Haemophilus influenzae (strain ATCC 51907 / DSM 11121 / KW20 / Rd).